A 547-amino-acid polypeptide reads, in one-letter code: Chaperonin GroEL (547 aa).

ATP contacts are provided by residues 30–33 (TLGP), K51, 87–91 (DGTTT), G415, 479–481 (NAA), and D495. The disordered stretch occupies residues 526-547 (KKDEPTPPAAGGGMGGMGGMDF). The segment covering 535-547 (AGGGMGGMGGMDF) has biased composition (gly residues).

The protein belongs to the chaperonin (HSP60) family. As to quaternary structure, forms a cylinder of 14 subunits composed of two heptameric rings stacked back-to-back. Interacts with the co-chaperonin GroES.

The protein localises to the cytoplasm. It carries out the reaction ATP + H2O + a folded polypeptide = ADP + phosphate + an unfolded polypeptide.. Functionally, together with its co-chaperonin GroES, plays an essential role in assisting protein folding. The GroEL-GroES system forms a nano-cage that allows encapsulation of the non-native substrate proteins and provides a physical environment optimized to promote and accelerate protein folding. The sequence is that of Chaperonin GroEL from Xylella fastidiosa (strain M12).